A 206-amino-acid polypeptide reads, in one-letter code: 3-isopropylmalate dehydratase small subunit (206 aa).

The protein belongs to the LeuD family. LeuD type 1 subfamily. As to quaternary structure, heterodimer of LeuC and LeuD.

The enzyme catalyses (2R,3S)-3-isopropylmalate = (2S)-2-isopropylmalate. Its pathway is amino-acid biosynthesis; L-leucine biosynthesis; L-leucine from 3-methyl-2-oxobutanoate: step 2/4. Catalyzes the isomerization between 2-isopropylmalate and 3-isopropylmalate, via the formation of 2-isopropylmaleate. The polypeptide is 3-isopropylmalate dehydratase small subunit (Leptospira borgpetersenii serovar Hardjo-bovis (strain L550)).